Reading from the N-terminus, the 486-residue chain is Cobyric acid synthase (486 aa).

The 189-residue stretch at alanine 250–alanine 438 folds into the GATase cobBQ-type domain. The Nucleophile role is filled by cysteine 331. Histidine 430 is an active-site residue.

The protein belongs to the CobB/CobQ family. CobQ subfamily.

It participates in cofactor biosynthesis; adenosylcobalamin biosynthesis. Functionally, catalyzes amidations at positions B, D, E, and G on adenosylcobyrinic A,C-diamide. NH(2) groups are provided by glutamine, and one molecule of ATP is hydrogenolyzed for each amidation. This Herminiimonas arsenicoxydans protein is Cobyric acid synthase.